The sequence spans 129 residues: Glycine cleavage system H protein (129 aa).

The Lipoyl-binding domain maps to 24–106; sequence LVRIGISAFA…HGEGWLLLVK (83 aa). The residue at position 65 (Lys-65) is an N6-lipoyllysine.

Belongs to the GcvH family. The glycine cleavage system is composed of four proteins: P, T, L and H. (R)-lipoate is required as a cofactor.

Its function is as follows. The glycine cleavage system catalyzes the degradation of glycine. The H protein shuttles the methylamine group of glycine from the P protein to the T protein. This is Glycine cleavage system H protein from Prochlorococcus marinus (strain SARG / CCMP1375 / SS120).